A 73-amino-acid chain; its full sequence is Small ribosomal subunit protein bS18 (73 aa).

It belongs to the bacterial ribosomal protein bS18 family. In terms of assembly, part of the 30S ribosomal subunit. Forms a tight heterodimer with protein bS6.

Binds as a heterodimer with protein bS6 to the central domain of the 16S rRNA, where it helps stabilize the platform of the 30S subunit. This chain is Small ribosomal subunit protein bS18, found in Synechococcus sp. (strain WH7803).